Here is a 121-residue protein sequence, read N- to C-terminus: Small ribosomal subunit protein uS13 (121 aa).

A disordered region spans residues 97–121 (VRGQRTRTNARTRRGARKTVAGKKK). Over residues 100-121 (QRTRTNARTRRGARKTVAGKKK) the composition is skewed to basic residues.

Belongs to the universal ribosomal protein uS13 family. Part of the 30S ribosomal subunit. Forms a loose heterodimer with protein S19. Forms two bridges to the 50S subunit in the 70S ribosome.

In terms of biological role, located at the top of the head of the 30S subunit, it contacts several helices of the 16S rRNA. In the 70S ribosome it contacts the 23S rRNA (bridge B1a) and protein L5 of the 50S subunit (bridge B1b), connecting the 2 subunits; these bridges are implicated in subunit movement. Contacts the tRNAs in the A and P-sites. The sequence is that of Small ribosomal subunit protein uS13 from Synechococcus sp. (strain CC9311).